The sequence spans 458 residues: Putative U-box domain-containing protein 46 (458 aa).

The U-box domain occupies 71 to 144; that stretch reads EVPKEFICTL…TQWCLVNKYD (74 aa). 2 ARM repeats span residues 241–281 and 283–322; these read ESNK…SLSA and DSNK…NLCI.

The enzyme catalyses S-ubiquitinyl-[E2 ubiquitin-conjugating enzyme]-L-cysteine + [acceptor protein]-L-lysine = [E2 ubiquitin-conjugating enzyme]-L-cysteine + N(6)-ubiquitinyl-[acceptor protein]-L-lysine.. The protein operates within protein modification; protein ubiquitination. Its function is as follows. Functions as an E3 ubiquitin ligase. The chain is Putative U-box domain-containing protein 46 (PUB46) from Arabidopsis thaliana (Mouse-ear cress).